The chain runs to 490 residues: Tryptophan decarboxylase (490 aa).

The residue at position 306 (Lys306) is an N6-(pyridoxal phosphate)lysine.

It belongs to the group II decarboxylase family. Homodimer. Pyridoxal 5'-phosphate serves as cofactor.

The protein localises to the cytoplasm. It catalyses the reaction L-tryptophan + H(+) = tryptamine + CO2. With respect to regulation, inhibited by (S)-alpha-fluoromethyltryptophan. Its function is as follows. Catalyzes the decarboxylation of tryptophan to tryptamine. Tryptamine is a neurotransmitter that induces the release of serotonin, which is suggested to modulate gastrointestinal motility. Therefore, the tryptophan decarboxylase from the gut bacteria Ruminococcus gnavus (strain ATCC 29149 / VPI C7-9) may influence host brain and behavior. Has weak activity with tyrosine and phenylalanine. This is Tryptophan decarboxylase from Mediterraneibacter gnavus (strain ATCC 29149 / DSM 114966 / JCM 6515 / VPI C7-9) (Ruminococcus gnavus).